Consider the following 23-residue polypeptide: Ocellatin-LB2 (23 aa).

An Asparagine amide modification is found at N23.

As to expression, expressed by the skin glands.

The protein resides in the secreted. Antibacterial peptide that inhibits the Gram-negative bacterium A.actinomycetemcomitans ATCC 29522 (MIC=210 uM). No activity against the bacteria E.coli ATCC 25922 and S.aureus ATCC 25923, or the fungi C.albicans ATCC 18804 and C.lusitaniae ATCC 56936. Does not show hemolytic activity towards rabbit erythrocytes. The sequence is that of Ocellatin-LB2 from Leptodactylus labyrinthicus (Labyrinth frog).